The primary structure comprises 100 residues: Urease subunit gamma (100 aa).

This sequence belongs to the urease gamma subunit family. In terms of assembly, heterotrimer of UreA (gamma), UreB (beta) and UreC (alpha) subunits. Three heterotrimers associate to form the active enzyme.

It localises to the cytoplasm. The enzyme catalyses urea + 2 H2O + H(+) = hydrogencarbonate + 2 NH4(+). The protein operates within nitrogen metabolism; urea degradation; CO(2) and NH(3) from urea (urease route): step 1/1. The protein is Urease subunit gamma of Verminephrobacter eiseniae (strain EF01-2).